The chain runs to 503 residues: ATP synthase subunit alpha (503 aa).

Position 170 to 177 (170 to 177 (GDRQTGKT)) interacts with ATP.

It belongs to the ATPase alpha/beta chains family. F-type ATPases have 2 components, CF(1) - the catalytic core - and CF(0) - the membrane proton channel. CF(1) has five subunits: alpha(3), beta(3), gamma(1), delta(1), epsilon(1). CF(0) has three main subunits: a(1), b(2) and c(9-12). The alpha and beta chains form an alternating ring which encloses part of the gamma chain. CF(1) is attached to CF(0) by a central stalk formed by the gamma and epsilon chains, while a peripheral stalk is formed by the delta and b chains.

It localises to the cell inner membrane. The enzyme catalyses ATP + H2O + 4 H(+)(in) = ADP + phosphate + 5 H(+)(out). Produces ATP from ADP in the presence of a proton gradient across the membrane. The alpha chain is a regulatory subunit. This chain is ATP synthase subunit alpha, found in Thermotoga maritima (strain ATCC 43589 / DSM 3109 / JCM 10099 / NBRC 100826 / MSB8).